The chain runs to 594 residues: Arginine--tRNA ligase (594 aa).

The 'HIGH' region motif lies at A139–H149.

It belongs to the class-I aminoacyl-tRNA synthetase family. As to quaternary structure, monomer.

The protein localises to the cytoplasm. It catalyses the reaction tRNA(Arg) + L-arginine + ATP = L-arginyl-tRNA(Arg) + AMP + diphosphate. The chain is Arginine--tRNA ligase from Paraburkholderia phymatum (strain DSM 17167 / CIP 108236 / LMG 21445 / STM815) (Burkholderia phymatum).